A 156-amino-acid chain; its full sequence is Ribosomal RNA large subunit methyltransferase H (156 aa).

S-adenosyl-L-methionine is bound by residues L73, G104, and L123–L128.

This sequence belongs to the RNA methyltransferase RlmH family. As to quaternary structure, homodimer.

The protein resides in the cytoplasm. The catalysed reaction is pseudouridine(1915) in 23S rRNA + S-adenosyl-L-methionine = N(3)-methylpseudouridine(1915) in 23S rRNA + S-adenosyl-L-homocysteine + H(+). Specifically methylates the pseudouridine at position 1915 (m3Psi1915) in 23S rRNA. The protein is Ribosomal RNA large subunit methyltransferase H of Shewanella loihica (strain ATCC BAA-1088 / PV-4).